We begin with the raw amino-acid sequence, 481 residues long: Acetyltransferase peniE (481 aa).

Catalysis depends on proton acceptor residues His164 and Asp411.

Belongs to the plant acyltransferase family. As to quaternary structure, monomer.

In terms of biological role, acetyltransferase; part of the gene cluster that mediates the biosynthesis of penifulvin A, a potent insecticidal sesquiterpene that features a [5.5.5.6]dioxafenestrane ring. The first step of the pathway is performed by the sesquiterpene cyclase peniA that generates the angular triquinane scaffold silphinene via cyclization of the linear farnesyl pyrophosphate (FPP). The cytochrome P450 monooxygenase peniB and the flavin-dependent monooxygenase peniC then catalyze a series of oxidation reactions to transform silphinene into penifulvin A. The dioxygenases peniD and peniF, as well as the acetyltransferase peniE, do not seem to be involved in the biosynthesis of penifulvin A. The chain is Acetyltransferase peniE from Penicillium patulum (Penicillium griseofulvum).